The primary structure comprises 633 residues: Putative serine/threonine-protein kinase L232 (633 aa).

The Protein kinase domain maps to 10–314 (YTIVDKLSEG…QSRKLFYEIL (305 aa)). ATP contacts are provided by residues 16-24 (LSEGTYGIV) and Lys39. The active-site Proton acceptor is Asp133.

It belongs to the protein kinase superfamily. Ser/Thr protein kinase family.

The enzyme catalyses L-seryl-[protein] + ATP = O-phospho-L-seryl-[protein] + ADP + H(+). It catalyses the reaction L-threonyl-[protein] + ATP = O-phospho-L-threonyl-[protein] + ADP + H(+). This Acanthamoeba polyphaga mimivirus (APMV) protein is Putative serine/threonine-protein kinase L232.